The primary structure comprises 452 residues: MQRRIMGIETEFGVTCTFHGHRRLSPDEVARYLFRRVVSWGRSSNVFLRNGARLYLDVGSHPEYATAECDSLVQLVTHDRAGEWVLEDLLVDAEQRLADEGIGGDIYLFKNNTDSAGNSYGCHENYLIVRAGEFSRISDVLLPFLVTRQLICGAGKVLQTPKAATFCLSQRAEHIWEGVSSATTRSRPIINTRDEPHADAEKYRRLHVIVGDSNMCETTTMLKVGTASLVLEMIEAGVPFRDFSLDNPIRAIREVSHDVTGRRPVRLAGGRQASALDIQREYYSRAVEHLQTREPNAQVEQVVDLWGRQLDAVESQDFAKVDTEIDWVIKRKLFQRYQDRYNMELSDPKIAQLDLAYHDIKRGRGVFDLLQRKGLATRVTTDEEIADAVDNPPQTTRARLRGEFISAAQAAGRDFTVDWVHLKLNDQAQRTVLCKDPFRAVDERVKRLIASM.

Glu9 is a Mg(2+) binding site. Arg53 is a binding site for ATP. Tyr55 contributes to the Mg(2+) binding site. Residue Asp57 is the Proton acceptor of the active site. Mg(2+) is bound at residue Glu63. ATP contacts are provided by Thr66 and Trp419.

It belongs to the Pup ligase/Pup deamidase family. Pup-conjugating enzyme subfamily.

It carries out the reaction ATP + [prokaryotic ubiquitin-like protein]-L-glutamate + [protein]-L-lysine = ADP + phosphate + N(6)-([prokaryotic ubiquitin-like protein]-gamma-L-glutamyl)-[protein]-L-lysine.. It participates in protein degradation; proteasomal Pup-dependent pathway. Its pathway is protein modification; protein pupylation. Functionally, catalyzes the covalent attachment of the prokaryotic ubiquitin-like protein modifier Pup to the proteasomal substrate proteins, thereby targeting them for proteasomal degradation. This tagging system is termed pupylation. The ligation reaction involves the side-chain carboxylate of the C-terminal glutamate of Pup and the side-chain amino group of a substrate lysine. The polypeptide is Pup--protein ligase (Mycobacterium ulcerans (strain Agy99)).